A 693-amino-acid chain; its full sequence is UvrABC system protein B (693 aa).

The 154-residue stretch at 35–188 (ERIKNGEKDV…DDLLRKFVSM (154 aa)) folds into the Helicase ATP-binding domain. 48 to 55 (GATGTGKS) is a binding site for ATP. The short motif at 101-124 (YYDYYQPEAYVAQTDTFIEKDSSV) is the Beta-hairpin element. Residues 438-604 (QIDDLLGEIK…PLRKKIADIT (167 aa)) form the Helicase C-terminal domain. The UVR domain occupies 648 to 683 (VGLIEQLTEQMHAAAGELQFELAARLRDEVGELKKE).

The protein belongs to the UvrB family. In terms of assembly, forms a heterotetramer with UvrA during the search for lesions. Interacts with UvrC in an incision complex.

It is found in the cytoplasm. Its function is as follows. The UvrABC repair system catalyzes the recognition and processing of DNA lesions. A damage recognition complex composed of 2 UvrA and 2 UvrB subunits scans DNA for abnormalities. Upon binding of the UvrA(2)B(2) complex to a putative damaged site, the DNA wraps around one UvrB monomer. DNA wrap is dependent on ATP binding by UvrB and probably causes local melting of the DNA helix, facilitating insertion of UvrB beta-hairpin between the DNA strands. Then UvrB probes one DNA strand for the presence of a lesion. If a lesion is found the UvrA subunits dissociate and the UvrB-DNA preincision complex is formed. This complex is subsequently bound by UvrC and the second UvrB is released. If no lesion is found, the DNA wraps around the other UvrB subunit that will check the other stand for damage. The sequence is that of UvrABC system protein B from Arthrobacter sp. (strain FB24).